A 325-amino-acid polypeptide reads, in one-letter code: Methionyl-tRNA formyltransferase (325 aa).

112–115 (SLLP) provides a ligand contact to (6S)-5,6,7,8-tetrahydrofolate.

Belongs to the Fmt family.

It carries out the reaction L-methionyl-tRNA(fMet) + (6R)-10-formyltetrahydrofolate = N-formyl-L-methionyl-tRNA(fMet) + (6S)-5,6,7,8-tetrahydrofolate + H(+). In terms of biological role, attaches a formyl group to the free amino group of methionyl-tRNA(fMet). The formyl group appears to play a dual role in the initiator identity of N-formylmethionyl-tRNA by promoting its recognition by IF2 and preventing the misappropriation of this tRNA by the elongation apparatus. The polypeptide is Methionyl-tRNA formyltransferase (Roseiflexus sp. (strain RS-1)).